Consider the following 484-residue polypeptide: Glutamate--tRNA ligase (484 aa).

The 'HIGH' region motif lies at 11–21; sequence PSPTGYLHIGN. A 'KMSKS' region motif is present at residues 252-256; the sequence is KLSKR. Residue lysine 255 coordinates ATP.

Belongs to the class-I aminoacyl-tRNA synthetase family. Glutamate--tRNA ligase type 1 subfamily. Monomer.

The protein resides in the cytoplasm. It catalyses the reaction tRNA(Glu) + L-glutamate + ATP = L-glutamyl-tRNA(Glu) + AMP + diphosphate. Its function is as follows. Catalyzes the attachment of glutamate to tRNA(Glu) in a two-step reaction: glutamate is first activated by ATP to form Glu-AMP and then transferred to the acceptor end of tRNA(Glu). The sequence is that of Glutamate--tRNA ligase from Staphylococcus saprophyticus subsp. saprophyticus (strain ATCC 15305 / DSM 20229 / NCIMB 8711 / NCTC 7292 / S-41).